The following is a 76-amino-acid chain: ATP synthase subunit 9, mitochondrial (76 aa).

Transmembrane regions (helical) follow at residues 11–31 and 53–73; these read IGAG…GIVF and ILGF…AFLI.

This sequence belongs to the ATPase C chain family. As to quaternary structure, F-type ATPases have 2 components, CF(1) - the catalytic core - and CF(0) - the membrane proton channel. CF(1) has five subunits: alpha(3), beta(3), gamma(1), delta(1), epsilon(1). CF(0) has three main subunits: a, b and c.

The protein localises to the mitochondrion membrane. In terms of biological role, this protein is one of the chains of the nonenzymatic membrane component (F0) of mitochondrial ATPase. The chain is ATP synthase subunit 9, mitochondrial (ATP9) from Chondrus crispus (Carrageen Irish moss).